The following is a 318-amino-acid chain: Electron transfer flavoprotein subunit alpha (318 aa).

257 to 285 is a binding site for FAD; it reads LYIALGISGAIQHRAGMQTSKTIVAVNKD.

This sequence belongs to the ETF alpha-subunit/FixB family. As to quaternary structure, heterodimer of an alpha and a beta subunit. Requires FAD as cofactor.

Functionally, the electron transfer flavoprotein serves as a specific electron acceptor for other dehydrogenases. It transfers the electrons to the main respiratory chain via ETF-ubiquinone oxidoreductase (ETF dehydrogenase). In Mycobacterium leprae (strain TN), this protein is Electron transfer flavoprotein subunit alpha (etfA).